A 246-amino-acid chain; its full sequence is LexA repressor (246 aa).

Residues 1 to 34 (MATPQTGKKTPSRRVSELPDGPPDATGLTPRQQR) are disordered. Positions 52-72 (MREIGEAVGLTSSSSVAHQLK) form a DNA-binding region, H-T-H motif. Active-site for autocatalytic cleavage activity residues include serine 170 and lysine 207.

The protein belongs to the peptidase S24 family. In terms of assembly, homodimer.

It carries out the reaction Hydrolysis of Ala-|-Gly bond in repressor LexA.. In terms of biological role, represses a number of genes involved in the response to DNA damage (SOS response), including recA and lexA. In the presence of single-stranded DNA, RecA interacts with LexA causing an autocatalytic cleavage which disrupts the DNA-binding part of LexA, leading to derepression of the SOS regulon and eventually DNA repair. In Nocardioides sp. (strain ATCC BAA-499 / JS614), this protein is LexA repressor.